The following is a 748-amino-acid chain: EF-hand domain-containing family member C2 (748 aa).

3 consecutive DM10 domains span residues 75–182, 226–366, and 428–535; these read DKQV…VKMG, DRQV…RSKY, and VSNV…EQHA. EF-hand domains follow at residues 556-591 and 631-666; these read EQQK…LDVE and EKFS…FRLP.

It is found in the cytoplasm. The protein localises to the cytoskeleton. The protein resides in the cilium axoneme. Functionally, microtubule inner protein (MIP) part of the dynein-decorated doublet microtubules (DMTs) in cilia axoneme, which is required for motile cilia beating. The polypeptide is EF-hand domain-containing family member C2 (efhc2) (Danio rerio (Zebrafish)).